Here is a 198-residue protein sequence, read N- to C-terminus: Probable minor pilin MMP0709 (198 aa).

Residues 1–5 (MSNRG) constitute a propeptide that is removed on maturation. The QXSXEXXXL motif lies at 6–14 (QLSIEMVIL).

The N-terminus is probably cleaved by the prepilin peptidase EppA, which recognizes the class III signal sequence.

The protein resides in the secreted. The protein localises to the cell surface. Its subcellular location is the fimbrium. The sequence is that of Probable minor pilin MMP0709 from Methanococcus maripaludis (strain DSM 14266 / JCM 13030 / NBRC 101832 / S2 / LL).